The following is a 335-amino-acid chain: Holliday junction branch migration complex subunit RuvB (335 aa).

The large ATPase domain (RuvB-L) stretch occupies residues 4–184 (ADRIISGQAK…FGIVQRLEFY (181 aa)). Residues isoleucine 23, arginine 24, glycine 65, lysine 68, threonine 69, threonine 70, 131-133 (EDY), arginine 174, tyrosine 184, and arginine 221 contribute to the ATP site. Threonine 69 serves as a coordination point for Mg(2+). Positions 185–255 (SVEDLTSIVA…VAKQALSMLD (71 aa)) are small ATPAse domain (RuvB-S). The segment at 258 to 335 (DAGFDYLDRK…RHFGLQKLSD (78 aa)) is head domain (RuvB-H). DNA contacts are provided by arginine 294, arginine 313, and arginine 318.

It belongs to the RuvB family. Homohexamer. Forms an RuvA(8)-RuvB(12)-Holliday junction (HJ) complex. HJ DNA is sandwiched between 2 RuvA tetramers; dsDNA enters through RuvA and exits via RuvB. An RuvB hexamer assembles on each DNA strand where it exits the tetramer. Each RuvB hexamer is contacted by two RuvA subunits (via domain III) on 2 adjacent RuvB subunits; this complex drives branch migration. In the full resolvosome a probable DNA-RuvA(4)-RuvB(12)-RuvC(2) complex forms which resolves the HJ.

The protein localises to the cytoplasm. The catalysed reaction is ATP + H2O = ADP + phosphate + H(+). Functionally, the RuvA-RuvB-RuvC complex processes Holliday junction (HJ) DNA during genetic recombination and DNA repair, while the RuvA-RuvB complex plays an important role in the rescue of blocked DNA replication forks via replication fork reversal (RFR). RuvA specifically binds to HJ cruciform DNA, conferring on it an open structure. The RuvB hexamer acts as an ATP-dependent pump, pulling dsDNA into and through the RuvAB complex. RuvB forms 2 homohexamers on either side of HJ DNA bound by 1 or 2 RuvA tetramers; 4 subunits per hexamer contact DNA at a time. Coordinated motions by a converter formed by DNA-disengaged RuvB subunits stimulates ATP hydrolysis and nucleotide exchange. Immobilization of the converter enables RuvB to convert the ATP-contained energy into a lever motion, pulling 2 nucleotides of DNA out of the RuvA tetramer per ATP hydrolyzed, thus driving DNA branch migration. The RuvB motors rotate together with the DNA substrate, which together with the progressing nucleotide cycle form the mechanistic basis for DNA recombination by continuous HJ branch migration. Branch migration allows RuvC to scan DNA until it finds its consensus sequence, where it cleaves and resolves cruciform DNA. The chain is Holliday junction branch migration complex subunit RuvB from Haemophilus influenzae (strain 86-028NP).